The primary structure comprises 178 residues: Endoribonuclease YbeY (178 aa).

Zn(2+) is bound by residues H118, H122, and H128. The interval 156–178 (YQQDRQDERDRRLLDKSRYFDEP) is disordered. Basic and acidic residues predominate over residues 159–178 (DRQDERDRRLLDKSRYFDEP).

The protein belongs to the endoribonuclease YbeY family. Requires Zn(2+) as cofactor.

The protein resides in the cytoplasm. Its function is as follows. Single strand-specific metallo-endoribonuclease involved in late-stage 70S ribosome quality control and in maturation of the 3' terminus of the 16S rRNA. In Mycobacterium marinum (strain ATCC BAA-535 / M), this protein is Endoribonuclease YbeY.